Reading from the N-terminus, the 296-residue chain is 4-hydroxybenzoate octaprenyltransferase (296 aa).

8 consecutive transmembrane segments (helical) span residues 28 to 48 (PIGIYLLLWPTLWAVWIAGKG), 52 to 72 (LKTVFIFVVGVFLMRAAGCVI), 102 to 122 (ALALFAVLVGLSFVLVLFTNA), 146 to 166 (YYPQVVLGAAFSWGMPMAFTA), 169 to 189 (GDLPAAAWLLYIANLLWTVGY), 219 to 239 (VIILTLQGLALGCLMLAGARF), 241 to 261 (LGACFYIGLLAAAGCFAWEFW), and 275 to 295 (FLHNHWAGLAIFLGIVADYAV).

The protein belongs to the UbiA prenyltransferase family. It depends on Mg(2+) as a cofactor.

It localises to the cell inner membrane. It catalyses the reaction all-trans-octaprenyl diphosphate + 4-hydroxybenzoate = 4-hydroxy-3-(all-trans-octaprenyl)benzoate + diphosphate. It functions in the pathway cofactor biosynthesis; ubiquinone biosynthesis. Catalyzes the prenylation of para-hydroxybenzoate (PHB) with an all-trans polyprenyl group. Mediates the second step in the final reaction sequence of ubiquinone-8 (UQ-8) biosynthesis, which is the condensation of the polyisoprenoid side chain with PHB, generating the first membrane-bound Q intermediate 3-octaprenyl-4-hydroxybenzoate. The sequence is that of 4-hydroxybenzoate octaprenyltransferase from Pseudomonas savastanoi pv. phaseolicola (strain 1448A / Race 6) (Pseudomonas syringae pv. phaseolicola (strain 1448A / Race 6)).